Consider the following 234-residue polypeptide: 7-cyano-7-deazaguanine synthase (234 aa).

13–23 provides a ligand contact to ATP; sequence FSGGIDSTTCL. Residues C197, C207, C210, and C213 each contribute to the Zn(2+) site.

Belongs to the QueC family. It depends on Zn(2+) as a cofactor.

The enzyme catalyses 7-carboxy-7-deazaguanine + NH4(+) + ATP = 7-cyano-7-deazaguanine + ADP + phosphate + H2O + H(+). It participates in purine metabolism; 7-cyano-7-deazaguanine biosynthesis. Catalyzes the ATP-dependent conversion of 7-carboxy-7-deazaguanine (CDG) to 7-cyano-7-deazaguanine (preQ(0)). The polypeptide is 7-cyano-7-deazaguanine synthase (Syntrophobacter fumaroxidans (strain DSM 10017 / MPOB)).